Reading from the N-terminus, the 500-residue chain is Glutathione reductase (500 aa).

Residues Ser-12 and Gly-13 each coordinate FAD. Ser-12 lines the glutathione pocket. Residue Arg-19 coordinates glutathione. FAD-binding residues include Glu-32, Thr-39, Cys-40, and Lys-48. Cys-40 and Cys-45 are joined by a disulfide. Tyr-95 contributes to the glutathione binding site. Position 111 (Ala-111) interacts with FAD. NADP(+) is bound by residues Ile-187, Glu-190, Arg-207, Arg-213, and Gly-272. Asp-312 and Thr-354 together coordinate FAD. Arg-362 lines the glutathione pocket. Val-384 is an NADP(+) binding site. Position 485 (His-485) interacts with FAD. The Proton acceptor role is filled by His-485.

Belongs to the class-I pyridine nucleotide-disulfide oxidoreductase family. Homodimer. FAD serves as cofactor.

It is found in the cytoplasm. It catalyses the reaction 2 glutathione + NADP(+) = glutathione disulfide + NADPH + H(+). Functionally, catalyzes the reduction of glutathione disulfide (GSSG) to reduced glutathione (GSH). Constitutes the major mechanism to maintain a high GSH:GSSG ratio in the cytosol. The protein is Glutathione reductase of Plasmodium falciparum (isolate K1 / Thailand).